Here is a 490-residue protein sequence, read N- to C-terminus: UDP-N-acetylmuramyl-tripeptide synthetase (490 aa).

An ATP-binding site is contributed by 113-119; the sequence is GTDGKTT. UDP-N-acetyl-alpha-D-muramoyl-L-alanyl-D-glutamate-binding positions include 158–159, Ser-185, and Arg-193; that span reads TT. Lys-225 bears the N6-carboxylysine mark.

Belongs to the MurCDEF family. MurE subfamily. Post-translationally, carboxylation is probably crucial for Mg(2+) binding and, consequently, for the gamma-phosphate positioning of ATP.

It localises to the cytoplasm. The protein operates within cell wall biogenesis; peptidoglycan biosynthesis. Its function is as follows. Catalyzes the addition of an amino acid to the nucleotide precursor UDP-N-acetylmuramoyl-L-alanyl-D-glutamate (UMAG) in the biosynthesis of bacterial cell-wall peptidoglycan. This is UDP-N-acetylmuramyl-tripeptide synthetase from Deinococcus radiodurans (strain ATCC 13939 / DSM 20539 / JCM 16871 / CCUG 27074 / LMG 4051 / NBRC 15346 / NCIMB 9279 / VKM B-1422 / R1).